A 179-amino-acid chain; its full sequence is Large ribosomal subunit protein uL5 (179 aa).

The protein belongs to the universal ribosomal protein uL5 family. As to quaternary structure, part of the 50S ribosomal subunit; part of the 5S rRNA/L5/L18/L25 subcomplex. Contacts the 5S rRNA and the P site tRNA. Forms a bridge to the 30S subunit in the 70S ribosome.

In terms of biological role, this is one of the proteins that bind and probably mediate the attachment of the 5S RNA into the large ribosomal subunit, where it forms part of the central protuberance. In the 70S ribosome it contacts protein S13 of the 30S subunit (bridge B1b), connecting the 2 subunits; this bridge is implicated in subunit movement. Contacts the P site tRNA; the 5S rRNA and some of its associated proteins might help stabilize positioning of ribosome-bound tRNAs. The sequence is that of Large ribosomal subunit protein uL5 from Xylella fastidiosa (strain M12).